The primary structure comprises 2410 residues: Coprinoferrin synthetase (2410 aa).

Positions 237 to 646 are adenylation 1; it reads LERRAKTNPH…GRIDTQIKVR (410 aa). The region spanning 783–860 is the Carrier 1 domain; sequence RDCTPLEAEV…DIAQLVHVST (78 aa). At Ser820 the chain carries O-(pantetheine 4'-phosphoryl)serine. The segment at 891–1260 is condensation 1; the sequence is DILPPFPVQE…SVEAVVNVHD (370 aa). The tract at residues 1298 to 1317 is disordered; the sequence is ELPLPSRRSPEPVRKVNDDE. The span at 1305 to 1314 shows a compositional bias: basic and acidic residues; that stretch reads RSPEPVRKVN. A Carrier 2 domain is found at 1324–1400; it reads LLDPVVVADL…RLARVVSNNK (77 aa). An O-(pantetheine 4'-phosphoryl)serine modification is found at Ser1361. The tract at residues 1436–1839 is condensation 2; it reads IIPSTALQSG…RIGRTFSVPS (404 aa). The 75-residue stretch at 1858–1932 folds into the Carrier 3 domain; the sequence is VQAGIIHPVL…DLVLQATEIK (75 aa). Ser1893 is subject to O-(pantetheine 4'-phosphoryl)serine. The segment at 1992-2315 is condensation 3; it reads FQYLFTFKLP…TPIFNVNVNV (324 aa).

It belongs to the NRP synthetase family.

It functions in the pathway siderophore biosynthesis. Functionally, nonribosomal peptide synthase; part of the gene cluster that mediates the biosynthesis of coprinoferrin, an acylated tripeptide hydroxamate siderophore. The biosynthesis of coprinoferrin depends on the hydroxylation of ornithine to N(5)-hydroxyornithine, catalyzed by the monooxygenase cpf2. The second step, the acylation of N(5)-hydroxy-L-ornithine to yield N(5)-hexanoyl-N(5)-hydroxyl-L-ornithine is catalyzed by a not yet identified acyltransferase. Finally, assembly of coprinoferrin is catalyzed by the nonribosomal peptide synthase (NRPS) cpf1 via amide bond formation between three N(5)-hexanoyl-N(5)-hydroxyl-L-ornithine molecules to release the linear trimer. Interestingly, proteins seemingly not directly related to biosynthesis, such as transcription factors, replication factors, and autophagy-related proteins, are conserved among the clusters homologous to the coprinoferrin cluster, suggesting that the cluster may also play developmental and cell biological functions. The sequence is that of Coprinoferrin synthetase from Coprinopsis cinerea (strain Okayama-7 / 130 / ATCC MYA-4618 / FGSC 9003) (Inky cap fungus).